The primary structure comprises 348 residues: Eukaryotic translation initiation factor 3 subunit H (348 aa).

Residues 35–169 (VQIDGLVVLK…LKAYRLTPKL (135 aa)) form the MPN domain. Residues 267–285 (QQQKHQYQQRRQQENIQRQ) show a composition bias toward low complexity. A disordered region spans residues 267-311 (QQQKHQYQQRRQQENIQRQSRGEPPLPEEDINKLFKPPQPPPRME).

Belongs to the eIF-3 subunit H family. In terms of assembly, component of the eukaryotic translation initiation factor 3 (eIF-3) complex, which is composed of 13 subunits: EIF3A, EIF3B, EIF3C, EIF3D, EIF3E, EIF3F, EIF3G, EIF3H, EIF3I, EIF3J, EIF3K, EIF3L and EIF3M.

Its subcellular location is the cytoplasm. Its function is as follows. Component of the eukaryotic translation initiation factor 3 (eIF-3) complex, which is involved in protein synthesis of a specialized repertoire of mRNAs and, together with other initiation factors, stimulates binding of mRNA and methionyl-tRNAi to the 40S ribosome. The eIF-3 complex specifically targets and initiates translation of a subset of mRNAs involved in cell proliferation. In Taeniopygia guttata (Zebra finch), this protein is Eukaryotic translation initiation factor 3 subunit H.